The following is a 751-amino-acid chain: Photosystem I P700 chlorophyll a apoprotein A1 (751 aa).

8 helical membrane-spanning segments follow: residues 72–95, 158–181, 197–221, 293–311, 348–371, 387–413, 435–457, and 532–550; these read IFSA…FHGA, LYCT…FHYH, MNHH…HVSM, TAHH…GHMY, WHAQ…QHMY, LSLF…IFMV, AIIS…LYIH, and FMVH…LILL. The [4Fe-4S] cluster site is built by Cys574 and Cys583. A run of 2 helical transmembrane segments spans residues 590–611 and 665–687; these read HVFL…HFSW and LSAY…MFLF. His676 contributes to the chlorophyll a' binding site. Chlorophyll a contacts are provided by Met684 and Tyr692. Phylloquinone is bound at residue Trp693. A helical transmembrane segment spans residues 725–745; the sequence is AVGVAHYLLGGIVTTWAFFLA.

It belongs to the PsaA/PsaB family. As to quaternary structure, the PsaA/B heterodimer binds the P700 chlorophyll special pair and subsequent electron acceptors. PSI consists of a core antenna complex that captures photons, and an electron transfer chain that converts photonic excitation into a charge separation. The cyanobacterial PSI reaction center is composed of one copy each of PsaA,B,C,D,E,F,I,J,K,L,M and X, and forms trimeric complexes. PSI electron transfer chain: 5 chlorophyll a, 1 chlorophyll a', 2 phylloquinones and 3 4Fe-4S clusters. PSI core antenna: 90 chlorophyll a, 22 carotenoids, 3 phospholipids and 1 galactolipid. P700 is a chlorophyll a/chlorophyll a' dimer, A0 is one or more chlorophyll a, A1 is one or both phylloquinones and FX is a shared 4Fe-4S iron-sulfur center. serves as cofactor.

It localises to the cellular thylakoid membrane. The catalysed reaction is reduced [plastocyanin] + hnu + oxidized [2Fe-2S]-[ferredoxin] = oxidized [plastocyanin] + reduced [2Fe-2S]-[ferredoxin]. PsaA and PsaB bind P700, the primary electron donor of photosystem I (PSI), as well as the electron acceptors A0, A1 and FX. PSI is a plastocyanin/cytochrome c6-ferredoxin oxidoreductase, converting photonic excitation into a charge separation, which transfers an electron from the donor P700 chlorophyll pair to the spectroscopically characterized acceptors A0, A1, FX, FA and FB in turn. Oxidized P700 is reduced on the lumenal side of the thylakoid membrane by plastocyanin or cytochrome c6. In Synechocystis sp. (strain ATCC 27184 / PCC 6803 / Kazusa), this protein is Photosystem I P700 chlorophyll a apoprotein A1.